Reading from the N-terminus, the 813-residue chain is Tax1-binding protein 1 homolog (813 aa).

Phosphoserine occurs at positions 124, 138, and 225. Residues 144-596 (TTKAGLLELK…SYSLQLAEKD (453 aa)) are a coiled coil. Residues 320–420 (EEIGKLQSCL…ELQLHAVKTD (101 aa)) form an oligomerization region. Ser-618 carries the post-translational modification Phosphoserine; by IKKA. Ser-631 bears the Phosphoserine mark. Residues 667–732 (AHETRDGADG…NVPIPPDPAN (66 aa)) are disordered. Ser-692 carries the phosphoserine; by IKKA modification. 2 UBZ1-type zinc fingers span residues 751–777 (HKKCPLCELMFPPNYDQIKFEEHVESH) and 778–804 (WKVCPMCSEQFPPDYDQQGFERHVQTH). Positions 754, 757, 773, 777, 781, 784, 800, and 804 each coordinate Zn(2+).

In terms of assembly, homooligomer. Interacts with TNFAIP3. Interacts with STARD13. Interacts with MYO6. Interacts with TOM1; the interaction is indirect and is mediated by MYO6, which acts as a bridge between TOM1 and TAX1BP1. Interacts with MAVS; this interaction induces MAVS polyubiquitination. Interacts with TNIP1. Interacts with TRAF6; this interaction mediates deubiquitination of TRAF6 and inhibition of NF-kappa-B activation. Interacts with RIPK1; this interaction negatively regulates RIPK1 ubiquitination. Interacts with NBR1. Interacts with TBK1. Interacts with RB1CC1. Interacts with SQSTM1. Interacts with AZI2. Interacts with TICAM1 and TRIM32; these interactions target TICAM1 to TAX1BP1-mediated selective autophagic degradation. In terms of processing, phosphorylated in the C-terminal region by CHUK/IKKA leading to NF-kappa-B signaling down-regulation.

It is found in the cytoplasm. It localises to the mitochondrion. The protein localises to the preautophagosomal structure. Its subcellular location is the cytoplasmic vesicle. The protein resides in the autophagosome. Functionally, ubiquitin-binding adapter that participates in inflammatory, antiviral and innate immune processes as well as selective autophagy regulation. Plays a key role in the negative regulation of NF-kappa-B and IRF3 signalings by acting as an adapter for the ubiquitin-editing enzyme A20/TNFAIP3 to bind and inactivate its substrates. Disrupts the interactions between the E3 ubiquitin ligase TRAF3 and TBK1/IKBKE to attenuate 'Lys63'-linked polyubiquitination of TBK1 and thereby IFN-beta production. Also recruits A20/TNFAIP3 to ubiquitinated signaling proteins TRAF6 and RIPK1, leading to their deubiquitination and disruption of IL-1 and TNF-induced NF-kappa-B signaling pathways. Inhibits virus-induced apoptosis by inducing the 'Lys-48'-linked polyubiquitination and degradation of MAVS via recruitment of the E3 ligase ITCH, thereby attenuating MAVS-mediated apoptosis signaling. As a macroautophagy/autophagy receptor, facilitates the xenophagic clearance of pathogenic bacteria such as Salmonella typhimurium and Mycobacterium tuberculosis. Upon NBR1 recruitment to the SQSTM1-ubiquitin condensates, acts as the major recruiter of RB1CC1 to these ubiquitin condensates to promote their autophagic degradation. Mediates the autophagic degradation of other substrates including TICAM1. This Rattus norvegicus (Rat) protein is Tax1-binding protein 1 homolog (Tax1bp1).